We begin with the raw amino-acid sequence, 193 residues long: Phosphoheptose isomerase (193 aa).

In terms of domain architecture, SIS spans L37–G193. Residue N52–G54 coordinates substrate. Zn(2+)-binding residues include H61 and E65. Residues E65, N93–D94, S119–S121, S124, and Q172 contribute to the substrate site. Residues Q172 and H180 each coordinate Zn(2+).

This sequence belongs to the SIS family. GmhA subfamily. As to quaternary structure, homotetramer. Zn(2+) is required as a cofactor.

Its subcellular location is the cytoplasm. The enzyme catalyses 2 D-sedoheptulose 7-phosphate = D-glycero-alpha-D-manno-heptose 7-phosphate + D-glycero-beta-D-manno-heptose 7-phosphate. The protein operates within carbohydrate biosynthesis; D-glycero-D-manno-heptose 7-phosphate biosynthesis; D-glycero-alpha-D-manno-heptose 7-phosphate and D-glycero-beta-D-manno-heptose 7-phosphate from sedoheptulose 7-phosphate: step 1/1. Catalyzes the isomerization of sedoheptulose 7-phosphate in D-glycero-D-manno-heptose 7-phosphate. The polypeptide is Phosphoheptose isomerase (Klebsiella pneumoniae subsp. pneumoniae (strain ATCC 700721 / MGH 78578)).